A 55-amino-acid chain; its full sequence is Large ribosomal subunit protein bL33 (55 aa).

Belongs to the bacterial ribosomal protein bL33 family.

This Xanthomonas oryzae pv. oryzae (strain PXO99A) protein is Large ribosomal subunit protein bL33.